We begin with the raw amino-acid sequence, 530 residues long: Na(+)/H(+) antiporter NhaB (530 aa).

Transmembrane regions (helical) follow at residues 13–33 (FLGK…VINP), 34–54 (LVFF…EFIF), 90–110 (LVAN…IYFM), 121–141 (ILIG…TAAF), 145–165 (FLDA…FYAI), 205–225 (LLMH…VGEP), 241–261 (FIIR…LTCI), 306–326 (GLIA…VGLI), 351–371 (EEAL…AVII), 393–413 (LALF…VFVG), 455–475 (GQAA…QLSY), and 481–501 (MALP…IFFL).

This sequence belongs to the NhaB Na(+)/H(+) (TC 2.A.34) antiporter family.

It is found in the cell inner membrane. The catalysed reaction is 2 Na(+)(in) + 3 H(+)(out) = 2 Na(+)(out) + 3 H(+)(in). Na(+)/H(+) antiporter that extrudes sodium in exchange for external protons. This is Na(+)/H(+) antiporter NhaB from Aliivibrio fischeri (strain ATCC 700601 / ES114) (Vibrio fischeri).